The chain runs to 293 residues: Undecaprenyl-diphosphatase (293 aa).

Helical transmembrane passes span 74–94 (VLVF…AGVF), 107–127 (WMII…KDLI), 134–154 (MWIT…AEKM), 209–229 (FLLA…DAFA), 243–263 (VGTL…MKFV), and 271–291 (FAAY…LGML).

The protein belongs to the UppP family.

It localises to the cell membrane. The catalysed reaction is di-trans,octa-cis-undecaprenyl diphosphate + H2O = di-trans,octa-cis-undecaprenyl phosphate + phosphate + H(+). Its function is as follows. Catalyzes the dephosphorylation of undecaprenyl diphosphate (UPP). Confers resistance to bacitracin. This is Undecaprenyl-diphosphatase from Corynebacterium glutamicum (strain ATCC 13032 / DSM 20300 / JCM 1318 / BCRC 11384 / CCUG 27702 / LMG 3730 / NBRC 12168 / NCIMB 10025 / NRRL B-2784 / 534).